A 463-amino-acid chain; its full sequence is Fumarate hydratase class II (463 aa).

Substrate-binding positions include 95 to 97 (SGT), 126 to 129 (HPND), 136 to 138 (SSN), and threonine 184. Histidine 185 functions as the Proton donor/acceptor in the catalytic mechanism. Residue serine 315 is part of the active site. Residues serine 316 and 321–323 (KIN) each bind substrate.

The protein belongs to the class-II fumarase/aspartase family. Fumarase subfamily. Homotetramer.

It localises to the cytoplasm. The enzyme catalyses (S)-malate = fumarate + H2O. The protein operates within carbohydrate metabolism; tricarboxylic acid cycle; (S)-malate from fumarate: step 1/1. In terms of biological role, involved in the TCA cycle. Catalyzes the stereospecific interconversion of fumarate to L-malate. This chain is Fumarate hydratase class II, found in Chlamydia trachomatis serovar D (strain ATCC VR-885 / DSM 19411 / UW-3/Cx).